A 297-amino-acid polypeptide reads, in one-letter code: MEEVESIHKPVMLKEVIHYLNLSPGKIVVDATLGLGGHSSEILRELRGEGLLIGIDRDEEVLKLARERLSKIAGNFVLFNTTYDNLQNILKELNLSFIDAILFDLGFSSFHIEKSGRGFSFMRPEEPLDMRYSKDTALTAADILNTFSESELSNLFWEYGEEPLSKKLAKKIVERRKDKKFAYVGDLLEVIDEVIPRRRRHEATKVFQALRIAVNDELNIFKRALEQVPFILSIGGRIVVITYHSLEDRIVKNFFKSYSDKILPVSKKVIKPSIEEIKENRRARSAKLRVGERRENS.

Residues 36–38, Asp-56, Leu-90, Asp-104, and His-111 contribute to the S-adenosyl-L-methionine site; that span reads GGH.

This sequence belongs to the methyltransferase superfamily. RsmH family.

The protein localises to the cytoplasm. The enzyme catalyses cytidine(1402) in 16S rRNA + S-adenosyl-L-methionine = N(4)-methylcytidine(1402) in 16S rRNA + S-adenosyl-L-homocysteine + H(+). Specifically methylates the N4 position of cytidine in position 1402 (C1402) of 16S rRNA. This chain is Ribosomal RNA small subunit methyltransferase H, found in Dictyoglomus thermophilum (strain ATCC 35947 / DSM 3960 / H-6-12).